Reading from the N-terminus, the 92-residue chain is Small ribosomal subunit protein uS19 (92 aa).

Belongs to the universal ribosomal protein uS19 family.

Protein S19 forms a complex with S13 that binds strongly to the 16S ribosomal RNA. The protein is Small ribosomal subunit protein uS19 of Leptospira biflexa serovar Patoc (strain Patoc 1 / Ames).